A 940-amino-acid polypeptide reads, in one-letter code: Isoleucine--tRNA ligase (940 aa).

The 'HIGH' region signature appears at 58–68; the sequence is PYANGSIHIGH. Glu564 contributes to the L-isoleucyl-5'-AMP binding site. Positions 605–609 match the 'KMSKS' region motif; it reads KMSKS. Lys608 lines the ATP pocket. 4 residues coordinate Zn(2+): Cys903, Cys906, Cys923, and Cys926.

It belongs to the class-I aminoacyl-tRNA synthetase family. IleS type 1 subfamily. In terms of assembly, monomer. Zn(2+) is required as a cofactor.

The protein localises to the cytoplasm. The enzyme catalyses tRNA(Ile) + L-isoleucine + ATP = L-isoleucyl-tRNA(Ile) + AMP + diphosphate. Its function is as follows. Catalyzes the attachment of isoleucine to tRNA(Ile). As IleRS can inadvertently accommodate and process structurally similar amino acids such as valine, to avoid such errors it has two additional distinct tRNA(Ile)-dependent editing activities. One activity is designated as 'pretransfer' editing and involves the hydrolysis of activated Val-AMP. The other activity is designated 'posttransfer' editing and involves deacylation of mischarged Val-tRNA(Ile). The sequence is that of Isoleucine--tRNA ligase from Shewanella putrefaciens (strain CN-32 / ATCC BAA-453).